Reading from the N-terminus, the 183-residue chain is Transposon gamma-delta resolvase (183 aa).

The Resolvase/invertase-type recombinase catalytic domain occupies 2–137 (RLFGYARVST…EGRQEAMAKG (136 aa)). The O-(5'-phospho-DNA)-serine intermediate role is filled by serine 10. The H-T-H motif DNA-binding region spans 161–180 (ASHISKTMNIARSTVYKVIN).

It belongs to the site-specific recombinase resolvase family.

Its function is as follows. This protein catalyzes the site-specific recombination of the transposon and also regulates its frequency of transposition. The chain is Transposon gamma-delta resolvase (tnpR) from Escherichia coli (strain K12).